Here is a 307-residue protein sequence, read N- to C-terminus: Pseudouridine-5'-phosphate glycosidase (307 aa).

Catalysis depends on Glu26, which acts as the Proton donor. Residues Lys88 and Val108 each contribute to the substrate site. Asp140 contributes to the Mn(2+) binding site. 142–144 lines the substrate pocket; it reads SAD. Lys161 (nucleophile) is an active-site residue.

The protein belongs to the pseudouridine-5'-phosphate glycosidase family. In terms of assembly, homotrimer. Requires Mn(2+) as cofactor.

It carries out the reaction D-ribose 5-phosphate + uracil = psi-UMP + H2O. In terms of biological role, catalyzes the reversible cleavage of pseudouridine 5'-phosphate (PsiMP) to ribose 5-phosphate and uracil. Functions biologically in the cleavage direction, as part of a pseudouridine degradation pathway. This Clostridium botulinum (strain Langeland / NCTC 10281 / Type F) protein is Pseudouridine-5'-phosphate glycosidase.